The primary structure comprises 441 residues: D-inositol 3-phosphate glycosyltransferase (441 aa).

1D-myo-inositol 3-phosphate is bound at residue His-38. UDP-N-acetyl-alpha-D-glucosamine-binding positions include Gln-44–Pro-45 and Gly-52. 1D-myo-inositol 3-phosphate is bound by residues Asp-49–Asn-54, Lys-107, Tyr-140, Thr-164, and Arg-184. Residues Arg-258, Lys-263, and Gln-316 each coordinate UDP-N-acetyl-alpha-D-glucosamine. The Mg(2+) site is built by Phe-325, Gln-326, and Ala-328. UDP-N-acetyl-alpha-D-glucosamine contacts are provided by Glu-338 and Glu-346. Thr-352 serves as a coordination point for Mg(2+).

The protein belongs to the glycosyltransferase group 1 family. MshA subfamily. Homodimer.

It carries out the reaction 1D-myo-inositol 3-phosphate + UDP-N-acetyl-alpha-D-glucosamine = 1D-myo-inositol 2-acetamido-2-deoxy-alpha-D-glucopyranoside 3-phosphate + UDP + H(+). Functionally, catalyzes the transfer of a N-acetyl-glucosamine moiety to 1D-myo-inositol 3-phosphate to produce 1D-myo-inositol 2-acetamido-2-deoxy-glucopyranoside 3-phosphate in the mycothiol biosynthesis pathway. The sequence is that of D-inositol 3-phosphate glycosyltransferase from Mycolicibacterium paratuberculosis (strain ATCC BAA-968 / K-10) (Mycobacterium paratuberculosis).